Consider the following 370-residue polypeptide: Probable protein phosphatase 2C 67 (370 aa).

Positions 35–344 (TFGEFSMAMI…DDITVIVVYL (310 aa)) constitute a PPM-type phosphatase domain. Mn(2+) is bound by residues aspartate 77, glycine 78, aspartate 276, and aspartate 335.

Belongs to the PP2C family. As to quaternary structure, interacts with SAUR19. Interacts with AHA2 at the plasma membrane. Mg(2+) serves as cofactor. Mn(2+) is required as a cofactor.

The protein resides in the cell membrane. It catalyses the reaction O-phospho-L-seryl-[protein] + H2O = L-seryl-[protein] + phosphate. The catalysed reaction is O-phospho-L-threonyl-[protein] + H2O = L-threonyl-[protein] + phosphate. Functionally, dephosphorylates and represses plasma membrane H(+)-ATPases (PM H(+)-ATPases, e.g. AHA1 and AHA2), thus influencing negatively plant growth and fitness. Promotes the apical hook maintenance of etiolated seedlings. In Arabidopsis thaliana (Mouse-ear cress), this protein is Probable protein phosphatase 2C 67.